A 192-amino-acid polypeptide reads, in one-letter code: Pyridoxal 5'-phosphate synthase subunit PdxT (192 aa).

46–48 (GES) is an L-glutamine binding site. The Nucleophile role is filled by Cys-75. L-glutamine contacts are provided by residues Arg-101 and 129-130 (IR). Active-site charge relay system residues include His-166 and Glu-168.

This sequence belongs to the glutaminase PdxT/SNO family. As to quaternary structure, in the presence of PdxS, forms a dodecamer of heterodimers. Only shows activity in the heterodimer.

It catalyses the reaction aldehydo-D-ribose 5-phosphate + D-glyceraldehyde 3-phosphate + L-glutamine = pyridoxal 5'-phosphate + L-glutamate + phosphate + 3 H2O + H(+). The enzyme catalyses L-glutamine + H2O = L-glutamate + NH4(+). The protein operates within cofactor biosynthesis; pyridoxal 5'-phosphate biosynthesis. Its function is as follows. Catalyzes the hydrolysis of glutamine to glutamate and ammonia as part of the biosynthesis of pyridoxal 5'-phosphate. The resulting ammonia molecule is channeled to the active site of PdxS. The sequence is that of Pyridoxal 5'-phosphate synthase subunit PdxT from Staphylococcus carnosus (strain TM300).